We begin with the raw amino-acid sequence, 297 residues long: uncharacterized protein (297 aa).

This sequence belongs to the glycosyltransferase 2 family.

This is an uncharacterized protein from Mycoplasma genitalium (strain ATCC 33530 / DSM 19775 / NCTC 10195 / G37) (Mycoplasmoides genitalium).